We begin with the raw amino-acid sequence, 420 residues long: Protein disulfide isomerase Creld1 (420 aa).

Residues 1–29 (MAPQPLRGLVPFLLWCLSLFLSLPGPVWL) form the signal peptide. At 30–362 (QPSPPPHSAP…GFFAEMTEDE (333 aa)) the chain is on the extracellular side. Residues 46-49 (CHTC) carry the CXXC motif. Cystine bridges form between Cys-46–Cys-49, Cys-155–Cys-169, Cys-163–Cys-181, and Cys-183–Cys-192. Residues 153–193 (LPCPGGTERPCGGYGQCEGEGTRGGSGHCDCQAGYGGEACG) form the EGF-like 1 domain. Asn-205 is a glycosylation site (N-linked (GlcNAc...) asparagine). FU repeat units follow at residues 208 to 255 (HLVC…EQAT) and 268 to 315 (SYEC…VVCP). Positions 278–281 (CLGC) match the CXXC motif. 4 disulfides stabilise this stretch: Cys-278-Cys-281, Cys-309-Cys-321, Cys-314-Cys-330, and Cys-332-Cys-343. One can recognise an EGF-like 2; calcium-binding domain in the interval 305–342 (DVDECETVVCPGENEQCENTEGSYRCVCAEGFRQEDGI). Residues 363 to 383 (MVVLQQMFFGVIICALATLAA) form a helical membrane-spanning segment. A topological domain (cytoplasmic) is located at residue Lys-384. Residues 385–405 (GDLVFTAIFIGAVAAMTGYWL) form a helical membrane-spanning segment. Residues 406–420 (SERSDRVLEGFIKGR) are Extracellular-facing.

It belongs to the CRELD family.

The protein resides in the membrane. The enzyme catalyses Catalyzes the rearrangement of -S-S- bonds in proteins.. Functionally, protein disulfide isomerase. Promotes the localization of acetylcholine receptors (AChRs) to the plasma membrane. This chain is Protein disulfide isomerase Creld1 (Creld1), found in Rattus norvegicus (Rat).